The sequence spans 625 residues: Alpha-protein kinase vwkA (625 aa).

Residues 1–15 show a composition bias toward basic and acidic residues; that stretch reads MESKYVLSTEKESKT. A disordered region spans residues 1 to 64; sequence MESKYVLSTE…GLSSGGSKTH (64 aa). Polar residues-rich tracts occupy residues 25–39 and 46–63; these read DMDSISNSLSKTSLG and SLKTDASRSGLSSGGSKT. Positions 87-114 form a coiled coil; that stretch reads TKDSITLAKEKEKKIEKRNEEIKLTFKA. Residues 122–322 form the VWFA domain; that stretch reads DLLFIVDCTG…KMNERIFISI (201 aa). Residues 386–600 enclose the Alpha-type protein kinase domain; the sequence is TCLSSSYEMK…HCKKLGLTIP (215 aa). An ATP-binding site is contributed by 570–576; sequence GSCNLGK. A disordered region spans residues 602-625; it reads FTSSSSTSSSSRSTSSSSSISYSY.

The protein belongs to the protein kinase superfamily. Alpha-type protein kinase family. ALPK subfamily. As to quaternary structure, interacts with calmodulin; in the presence of calcium. Autophosphorylated, in vitro.

The protein resides in the cytoplasm. It localises to the cytosol. Its subcellular location is the perinuclear region. The protein localises to the contractile vacuole membrane. It carries out the reaction L-seryl-[protein] + ATP = O-phospho-L-seryl-[protein] + ADP + H(+). The catalysed reaction is L-threonyl-[protein] + ATP = O-phospho-L-threonyl-[protein] + ADP + H(+). Its activity is regulated as follows. Autophosphorylation activity enhanced by calcium/calmodulin. Its function is as follows. Displays a modest preference for threonine over serine residues. Does not phosphorylate myosin II, however can phosphorylate MBP, in vitro. May be involved in the regulation of myosin II function during cytokinesis. Overexpression leads to impaired cell proliferation in suspension culture and fails to develop beyond the mound stage. Both overexpression and absence of the gene can result in defects in cytokinesis and alterations in myosin II abundance and assembly. The sequence is that of Alpha-protein kinase vwkA (vwkA) from Dictyostelium discoideum (Social amoeba).